Here is a 515-residue protein sequence, read N- to C-terminus: ATP synthase subunit alpha (515 aa).

171–178 (GDRQTGKT) serves as a coordination point for ATP.

The protein belongs to the ATPase alpha/beta chains family. In terms of assembly, F-type ATPases have 2 components, CF(1) - the catalytic core - and CF(0) - the membrane proton channel. CF(1) has five subunits: alpha(3), beta(3), gamma(1), delta(1), epsilon(1). CF(0) has three main subunits: a(1), b(2) and c(9-12). The alpha and beta chains form an alternating ring which encloses part of the gamma chain. CF(1) is attached to CF(0) by a central stalk formed by the gamma and epsilon chains, while a peripheral stalk is formed by the delta and b chains.

Its subcellular location is the cell inner membrane. The catalysed reaction is ATP + H2O + 4 H(+)(in) = ADP + phosphate + 5 H(+)(out). Functionally, produces ATP from ADP in the presence of a proton gradient across the membrane. The alpha chain is a regulatory subunit. The polypeptide is ATP synthase subunit alpha (Xanthomonas campestris pv. campestris (strain 8004)).